A 528-amino-acid polypeptide reads, in one-letter code: Bifunctional pantoate ligase/cytidylate kinase (528 aa).

The segment at 1–293 is pantoate--beta-alanine ligase; that stretch reads MRLFTTIAGL…IGSCRLIDNI (293 aa). Position 34–41 (34–41) interacts with ATP; that stretch reads MGALHKGH. His-41 acts as the Proton donor in catalysis. Gln-65 serves as a coordination point for (R)-pantoate. Gln-65 contributes to the beta-alanine binding site. 160-163 is a binding site for ATP; it reads GQKD. Residue Gln-166 participates in (R)-pantoate binding. Residues Ile-189 and 197–200 contribute to the ATP site; that span reads ISSR. The segment at 294 to 528 is cytidylate kinase; it reads LLRNRKPIIA…YGKSSVNNII (235 aa).

It in the N-terminal section; belongs to the pantothenate synthetase family. In the C-terminal section; belongs to the cytidylate kinase family. Type 1 subfamily.

It localises to the cytoplasm. It carries out the reaction (R)-pantoate + beta-alanine + ATP = (R)-pantothenate + AMP + diphosphate + H(+). The catalysed reaction is CMP + ATP = CDP + ADP. The enzyme catalyses dCMP + ATP = dCDP + ADP. The protein operates within cofactor biosynthesis; (R)-pantothenate biosynthesis; (R)-pantothenate from (R)-pantoate and beta-alanine: step 1/1. Functionally, catalyzes the condensation of pantoate with beta-alanine in an ATP-dependent reaction via a pantoyl-adenylate intermediate. Catalyzes the transfer of a phosphate group from ATP to either CMP or dCMP to form CDP or dCDP and ADP, respectively. This Trichodesmium erythraeum (strain IMS101) protein is Bifunctional pantoate ligase/cytidylate kinase.